The chain runs to 308 residues: Ribosomal RNA large subunit methyltransferase F (308 aa).

The protein belongs to the methyltransferase superfamily. METTL16/RlmF family.

Its subcellular location is the cytoplasm. The enzyme catalyses adenosine(1618) in 23S rRNA + S-adenosyl-L-methionine = N(6)-methyladenosine(1618) in 23S rRNA + S-adenosyl-L-homocysteine + H(+). Its function is as follows. Specifically methylates the adenine in position 1618 of 23S rRNA. This Salmonella schwarzengrund (strain CVM19633) protein is Ribosomal RNA large subunit methyltransferase F.